A 471-amino-acid polypeptide reads, in one-letter code: NALCN channel auxiliary factor 2 (471 aa).

The chain crosses the membrane as a helical span at residues 47–67 (LASLLFFTVLLADHLWLCAGA). The segment at 76 to 115 (SAMRPPWGAGRERQPVPPRAVLPPPPPSPGEPSASSGTCG) is disordered. Over residues 90-105 (PVPPRAVLPPPPPSPG) the composition is skewed to pro residues. An N-linked (GlcNAc...) asparagine glycan is attached at Asn120. 2 disordered regions span residues 158–178 (EPTT…APEF) and 399–424 (HYHP…GGSR). Pro residues predominate over residues 161–171 (TPAPPLRPPDS). A helical membrane pass occupies residues 432–452 (LCVLVLILLHTVVSFSSSQSG).

This sequence belongs to the NALF family.

The protein localises to the membrane. In terms of biological role, probable component of the NALCN channel complex, a channel that regulates the resting membrane potential and controls neuronal excitability. The protein is NALCN channel auxiliary factor 2 (Nalf2) of Mus musculus (Mouse).